The chain runs to 583 residues: Aspartate--tRNA ligase (583 aa).

Residue Glu174 participates in L-aspartate binding. The aspartate stretch occupies residues 198-201; it reads QITK. Arg220 is a binding site for L-aspartate. Residues 220-222 and Gln229 contribute to the ATP site; that span reads RDE. His443 is an L-aspartate binding site. Glu477 provides a ligand contact to ATP. Arg484 lines the L-aspartate pocket. Residue 529-532 participates in ATP binding; that stretch reads GLDR.

This sequence belongs to the class-II aminoacyl-tRNA synthetase family. Type 1 subfamily. Homodimer.

The protein resides in the cytoplasm. It catalyses the reaction tRNA(Asp) + L-aspartate + ATP = L-aspartyl-tRNA(Asp) + AMP + diphosphate. Catalyzes the attachment of L-aspartate to tRNA(Asp) in a two-step reaction: L-aspartate is first activated by ATP to form Asp-AMP and then transferred to the acceptor end of tRNA(Asp). The protein is Aspartate--tRNA ligase of Streptococcus thermophilus (strain ATCC BAA-491 / LMD-9).